Here is a 311-residue protein sequence, read N- to C-terminus: tRNA N6-adenosine threonylcarbamoyltransferase (311 aa).

The Fe cation site is built by His108 and His112. Residues 130-134 (LVSGG), Asp163, Gly176, Asp180, and Asn270 each bind substrate. Residue Asp294 participates in Fe cation binding.

Belongs to the KAE1 / TsaD family. Fe(2+) serves as cofactor.

The protein resides in the cytoplasm. The enzyme catalyses L-threonylcarbamoyladenylate + adenosine(37) in tRNA = N(6)-L-threonylcarbamoyladenosine(37) in tRNA + AMP + H(+). Its function is as follows. Required for the formation of a threonylcarbamoyl group on adenosine at position 37 (t(6)A37) in tRNAs that read codons beginning with adenine. Is involved in the transfer of the threonylcarbamoyl moiety of threonylcarbamoyl-AMP (TC-AMP) to the N6 group of A37, together with TsaE and TsaB. TsaD likely plays a direct catalytic role in this reaction. The protein is tRNA N6-adenosine threonylcarbamoyltransferase of Metamycoplasma arthritidis (strain 158L3-1) (Mycoplasma arthritidis).